The following is a 335-amino-acid chain: Deoxyhypusine hydroxylase (335 aa).

HEAT-like PBS-type repeat units lie at residues 71–97 (LKHE…VVKD), 104–130 (CRHE…LRDN), 200–233 (QRYR…GLKD), 238–264 (FRHE…ALSD), and 271–298 (VRHE…FLND). Residues H73, E74, H106, and E107 each contribute to the Fe cation site. H240, E241, H273, and E274 together coordinate Fe cation.

The protein belongs to the deoxyhypusine hydroxylase family. Fe(2+) serves as cofactor.

Its subcellular location is the cytoplasm. It localises to the nucleus. The enzyme catalyses [eIF5A protein]-deoxyhypusine + AH2 + O2 = [eIF5A protein]-hypusine + A + H2O. The protein operates within protein modification; eIF5A hypusination. Its function is as follows. Catalyzes the hydroxylation of the N(6)-(4-aminobutyl)-L-lysine intermediate to form hypusine, an essential post-translational modification only found in mature eIF-5A factor. The polypeptide is Deoxyhypusine hydroxylase (lia1) (Aspergillus clavatus (strain ATCC 1007 / CBS 513.65 / DSM 816 / NCTC 3887 / NRRL 1 / QM 1276 / 107)).